The primary structure comprises 273 residues: Large ribosomal subunit protein uL2cz/uL2cy (273 aa).

Disordered regions lie at residues 1-23 (MAIH…SQVK) and 224-273 (NPVD…RRRK).

This sequence belongs to the universal ribosomal protein uL2 family. Part of the 50S ribosomal subunit.

The protein localises to the plastid. It is found in the chloroplast. The chain is Large ribosomal subunit protein uL2cz/uL2cy (rpl2-A) from Amborella trichopoda.